A 291-amino-acid chain; its full sequence is Urease accessory protein UreD (291 aa).

It belongs to the UreD family. UreD, UreF and UreG form a complex that acts as a GTP-hydrolysis-dependent molecular chaperone, activating the urease apoprotein by helping to assemble the nickel containing metallocenter of UreC. The UreE protein probably delivers the nickel.

The protein resides in the cytoplasm. Required for maturation of urease via the functional incorporation of the urease nickel metallocenter. The chain is Urease accessory protein UreD from Acinetobacter baumannii (strain ACICU).